The following is an 885-amino-acid chain: Alanine--tRNA ligase (885 aa).

Residues H564, H568, C676, and H680 each contribute to the Zn(2+) site.

This sequence belongs to the class-II aminoacyl-tRNA synthetase family. Zn(2+) serves as cofactor.

Its subcellular location is the cytoplasm. The catalysed reaction is tRNA(Ala) + L-alanine + ATP = L-alanyl-tRNA(Ala) + AMP + diphosphate. Catalyzes the attachment of alanine to tRNA(Ala) in a two-step reaction: alanine is first activated by ATP to form Ala-AMP and then transferred to the acceptor end of tRNA(Ala). Also edits incorrectly charged Ser-tRNA(Ala) and Gly-tRNA(Ala) via its editing domain. This is Alanine--tRNA ligase from Brucella abortus (strain 2308).